Here is a 312-residue protein sequence, read N- to C-terminus: TATA box-binding protein-like 2 (312 aa).

Residues 65 to 115 (DELSTQDEPSQVEKESKNEDSGIYTDCPQKESTQADIDTSNSAQNTSQFNL) are disordered. Residues 75–84 (QVEKESKNED) show a composition bias toward basic and acidic residues. Polar residues predominate over residues 94-115 (KESTQADIDTSNSAQNTSQFNL).

The protein belongs to the TBP family. In terms of tissue distribution, in adults, expressed in the gonads, with expression much higher in the ovary than the testis (at protein level). Shows a small amount of expression in other adult organs, including the brain and kidney. Embryonic expression is mostly ubiquitous except in early gastrula embryos where expression is asymmetric.

The protein resides in the nucleus. TATA box-binding transcription factor. Members of the TBP family are differentially required to regulate transcription and development during early embryogenesis. Commits mesoderm to the hematopoietic lineage during hemopoiesis, acting via mespa. Binds to the mespa promoter. The protein is TATA box-binding protein-like 2 of Danio rerio (Zebrafish).